The primary structure comprises 339 residues: Anthranilate phosphoribosyltransferase (339 aa).

Residues Gly-81, 84 to 85, Ser-89, 91 to 94, 109 to 117, and Ala-121 contribute to the 5-phospho-alpha-D-ribose 1-diphosphate site; these read GD, NVSS, and KHGNRALSS. Anthranilate is bound at residue Gly-81. Ser-93 contacts Mg(2+). Asn-112 serves as a coordination point for anthranilate. Position 167 (Arg-167) interacts with anthranilate. Residues Asp-225 and Glu-226 each coordinate Mg(2+).

It belongs to the anthranilate phosphoribosyltransferase family. Homodimer. It depends on Mg(2+) as a cofactor.

The enzyme catalyses N-(5-phospho-beta-D-ribosyl)anthranilate + diphosphate = 5-phospho-alpha-D-ribose 1-diphosphate + anthranilate. It participates in amino-acid biosynthesis; L-tryptophan biosynthesis; L-tryptophan from chorismate: step 2/5. Functionally, catalyzes the transfer of the phosphoribosyl group of 5-phosphorylribose-1-pyrophosphate (PRPP) to anthranilate to yield N-(5'-phosphoribosyl)-anthranilate (PRA). The chain is Anthranilate phosphoribosyltransferase from Brucella suis biovar 1 (strain 1330).